Here is a 117-residue protein sequence, read N- to C-terminus: Large ribosomal subunit protein bL20 (117 aa).

Belongs to the bacterial ribosomal protein bL20 family.

Binds directly to 23S ribosomal RNA and is necessary for the in vitro assembly process of the 50S ribosomal subunit. It is not involved in the protein synthesizing functions of that subunit. The sequence is that of Large ribosomal subunit protein bL20 from Ruminiclostridium cellulolyticum (strain ATCC 35319 / DSM 5812 / JCM 6584 / H10) (Clostridium cellulolyticum).